A 671-amino-acid chain; its full sequence is UvrABC system protein B (671 aa).

Residues E25–R412 enclose the Helicase ATP-binding domain. ATP is bound at residue G38 to T45. The short motif at Y91–I114 is the Beta-hairpin element. One can recognise a Helicase C-terminal domain in the interval Q429 to I582. The disordered stretch occupies residues P601–E624. Over residues A614 to E624 the composition is skewed to basic and acidic residues. Positions N632–R667 constitute a UVR domain.

It belongs to the UvrB family. In terms of assembly, forms a heterotetramer with UvrA during the search for lesions. Interacts with UvrC in an incision complex.

It localises to the cytoplasm. Functionally, the UvrABC repair system catalyzes the recognition and processing of DNA lesions. A damage recognition complex composed of 2 UvrA and 2 UvrB subunits scans DNA for abnormalities. Upon binding of the UvrA(2)B(2) complex to a putative damaged site, the DNA wraps around one UvrB monomer. DNA wrap is dependent on ATP binding by UvrB and probably causes local melting of the DNA helix, facilitating insertion of UvrB beta-hairpin between the DNA strands. Then UvrB probes one DNA strand for the presence of a lesion. If a lesion is found the UvrA subunits dissociate and the UvrB-DNA preincision complex is formed. This complex is subsequently bound by UvrC and the second UvrB is released. If no lesion is found, the DNA wraps around the other UvrB subunit that will check the other stand for damage. The polypeptide is UvrABC system protein B (Pseudomonas syringae pv. syringae (strain B728a)).